Consider the following 69-residue polypeptide: DNA-directed RNA polymerase subunit epsilon (69 aa).

Belongs to the RNA polymerase subunit epsilon family. As to quaternary structure, RNAP is composed of a core of 2 alpha, a beta and a beta' subunit. The core is associated with a delta subunit, and at least one of epsilon or omega. When a sigma factor is associated with the core the holoenzyme is formed, which can initiate transcription.

The catalysed reaction is RNA(n) + a ribonucleoside 5'-triphosphate = RNA(n+1) + diphosphate. In terms of biological role, a non-essential component of RNA polymerase (RNAP). This Shouchella clausii (strain KSM-K16) (Alkalihalobacillus clausii) protein is DNA-directed RNA polymerase subunit epsilon.